Consider the following 180-residue polypeptide: Large ribosomal subunit protein uL5 (180 aa).

Belongs to the universal ribosomal protein uL5 family. In terms of assembly, part of the 50S ribosomal subunit; part of the 5S rRNA/L5/L18/L25 subcomplex. Contacts the 5S rRNA and the P site tRNA. Forms a bridge to the 30S subunit in the 70S ribosome.

This is one of the proteins that bind and probably mediate the attachment of the 5S RNA into the large ribosomal subunit, where it forms part of the central protuberance. In the 70S ribosome it contacts protein S13 of the 30S subunit (bridge B1b), connecting the 2 subunits; this bridge is implicated in subunit movement. Contacts the P site tRNA; the 5S rRNA and some of its associated proteins might help stabilize positioning of ribosome-bound tRNAs. The polypeptide is Large ribosomal subunit protein uL5 (Xanthomonas campestris pv. campestris (strain 8004)).